A 296-amino-acid polypeptide reads, in one-letter code: Mycothiol acetyltransferase (296 aa).

N-acetyltransferase domains follow at residues Met1–Asp148 and Val151–Ala296. Glu34 lines the 1D-myo-inositol 2-(L-cysteinylamino)-2-deoxy-alpha-D-glucopyranoside pocket. Residues Leu79–Val81 and Arg87–Ser92 contribute to the acetyl-CoA site. Glu178, Lys219, and Glu229 together coordinate 1D-myo-inositol 2-(L-cysteinylamino)-2-deoxy-alpha-D-glucopyranoside. Residues Val233 to Val235 and Gln240 to His246 contribute to the acetyl-CoA site. Tyr267 is a binding site for 1D-myo-inositol 2-(L-cysteinylamino)-2-deoxy-alpha-D-glucopyranoside. An acetyl-CoA-binding site is contributed by Asn272 to Arg277.

Belongs to the acetyltransferase family. MshD subfamily. Monomer.

The enzyme catalyses 1D-myo-inositol 2-(L-cysteinylamino)-2-deoxy-alpha-D-glucopyranoside + acetyl-CoA = mycothiol + CoA + H(+). In terms of biological role, catalyzes the transfer of acetyl from acetyl-CoA to desacetylmycothiol (Cys-GlcN-Ins) to form mycothiol. The polypeptide is Mycothiol acetyltransferase (Mycobacteroides abscessus (strain ATCC 19977 / DSM 44196 / CCUG 20993 / CIP 104536 / JCM 13569 / NCTC 13031 / TMC 1543 / L948) (Mycobacterium abscessus)).